Reading from the N-terminus, the 189-residue chain is Peptidyl-tRNA hydrolase (189 aa).

Residue Tyr-16 participates in tRNA binding. His-21 functions as the Proton acceptor in the catalytic mechanism. Residues Phe-67, Asn-69, and Asn-115 each coordinate tRNA.

It belongs to the PTH family. In terms of assembly, monomer.

The protein resides in the cytoplasm. The catalysed reaction is an N-acyl-L-alpha-aminoacyl-tRNA + H2O = an N-acyl-L-amino acid + a tRNA + H(+). Its function is as follows. Hydrolyzes ribosome-free peptidyl-tRNAs (with 1 or more amino acids incorporated), which drop off the ribosome during protein synthesis, or as a result of ribosome stalling. Catalyzes the release of premature peptidyl moieties from peptidyl-tRNA molecules trapped in stalled 50S ribosomal subunits, and thus maintains levels of free tRNAs and 50S ribosomes. The sequence is that of Peptidyl-tRNA hydrolase from Legionella pneumophila (strain Lens).